Here is a 266-residue protein sequence, read N- to C-terminus: Undecaprenyl-diphosphatase 3 (266 aa).

8 consecutive transmembrane segments (helical) span residues 4-24, 43-63, 86-106, 109-129, 145-165, 186-206, 219-239, and 246-266; these read IEAF…FLPI, SGRA…CWLY, FSVL…VDFI, VLFS…IIFW, ITFK…IPGT, TEFS…YDLL, NIGL…KALV, and TLRV…FVML.

The protein belongs to the UppP family.

It localises to the cell inner membrane. The enzyme catalyses di-trans,octa-cis-undecaprenyl diphosphate + H2O = di-trans,octa-cis-undecaprenyl phosphate + phosphate + H(+). Catalyzes the dephosphorylation of undecaprenyl diphosphate (UPP). Confers resistance to bacitracin. The sequence is that of Undecaprenyl-diphosphatase 3 from Acinetobacter baylyi (strain ATCC 33305 / BD413 / ADP1).